The following is a 382-amino-acid chain: uncharacterized protein (382 aa).

12 helical membrane passes run 14 to 34 (GLLL…LWLA), 45 to 65 (VVSS…GYVI), 79 to 99 (FIFA…SWLA), 102 to 122 (FVAG…LMCS), 131 to 151 (LLAA…LLVS), 157 to 177 (LMSV…PLLF), 204 to 224 (LGVN…GLMP), 235 to 255 (ASIG…QWPI), 270 to 290 (VQVF…AMAP), 291 to 311 (ALFI…AWAC), 325 to 345 (ALLL…AMLM), and 348 to 368 (FSDN…LLML).

Belongs to the major facilitator superfamily. YcaD (TC 2.A.1.26) family.

The protein resides in the cell inner membrane. This is an uncharacterized protein from Shigella dysenteriae serotype 1 (strain Sd197).